Reading from the N-terminus, the 395-residue chain is Selection and upkeep of intraepithelial T-cells protein 7 (395 aa).

A signal peptide spans 1–25 (MMKPEFFCFSGFCVYFLFLQVVVSS). The region spanning 26 to 141 (EKLRVTTPTR…DAAIMNLNVT (116 aa)) is the Ig-like V-type domain. Residues 26–248 (EKLRVTTPTR…FNRDRIWMES (223 aa)) are Extracellular-facing. A disulfide bridge links Cys49 with Cys123. N-linked (GlcNAc...) asparagine glycans are attached at residues Asn92 and Asn139. Residues 142-233 (AVGLETEIHV…TGEEKQTSII (92 aa)) enclose the Ig-like C1-type domain. The cysteines at positions 163 and 217 are disulfide-linked. Residues 249 to 269 (LASIVWIMLSVYILYIICFYW) traverse the membrane as a helical segment. Over 270 to 287 (RTGCASGCLSKCFCVVTS) the chain is Cytoplasmic. The chain crosses the membrane as a helical span at residues 288–308 (WPVQIVHLLFCTGTFFAIYLP). The Extracellular portion of the chain corresponds to 309-329 (HRSRVSLSDPQFPLYNNWITE). Residues 330–350 (LLFVILFLTICFALPIILLFI) form a helical membrane-spanning segment. Over 351–395 (QFQFTSLTKWEKNKDGIMDQPRLGKAHETSSLYRKKTGKSWEQEK) the chain is Cytoplasmic. Residues 371–395 (PRLGKAHETSSLYRKKTGKSWEQEK) are disordered.

The protein belongs to the SKINT family. Expressed in skin, thymus, testis and, to a lower extent, bladder.

Its subcellular location is the membrane. May act by engaging a cell surface molecule on immature T-cells in the embryonic thymus. The chain is Selection and upkeep of intraepithelial T-cells protein 7 (Skint7) from Mus musculus (Mouse).